A 54-amino-acid chain; its full sequence is MHDIAGVTNETGNVLGMMPHPERAVEALLGGTDGLGVFQSLINQTEGADVRGAR.

One can recognise a Glutamine amidotransferase type-1 domain in the interval 1-51 (MHDIAGVTNETGNVLGMMPHPERAVEALLGGTDGLGVFQSLINQTEGADVR). Active-site residues include His20 and Glu22.

Part of the FGAM synthase complex composed of 1 PurL, 1 PurQ and 2 PurS subunits.

The protein resides in the cytoplasm. The enzyme catalyses N(2)-formyl-N(1)-(5-phospho-beta-D-ribosyl)glycinamide + L-glutamine + ATP + H2O = 2-formamido-N(1)-(5-O-phospho-beta-D-ribosyl)acetamidine + L-glutamate + ADP + phosphate + H(+). It carries out the reaction L-glutamine + H2O = L-glutamate + NH4(+). Its pathway is purine metabolism; IMP biosynthesis via de novo pathway; 5-amino-1-(5-phospho-D-ribosyl)imidazole from N(2)-formyl-N(1)-(5-phospho-D-ribosyl)glycinamide: step 1/2. Functionally, part of the phosphoribosylformylglycinamidine synthase complex involved in the purines biosynthetic pathway. Catalyzes the ATP-dependent conversion of formylglycinamide ribonucleotide (FGAR) and glutamine to yield formylglycinamidine ribonucleotide (FGAM) and glutamate. The FGAM synthase complex is composed of three subunits. PurQ produces an ammonia molecule by converting glutamine to glutamate. PurL transfers the ammonia molecule to FGAR to form FGAM in an ATP-dependent manner. PurS interacts with PurQ and PurL and is thought to assist in the transfer of the ammonia molecule from PurQ to PurL. This Lacticaseibacillus casei (Lactobacillus casei) protein is Phosphoribosylformylglycinamidine synthase subunit PurQ (purQ).